We begin with the raw amino-acid sequence, 345 residues long: Methylthioribose-1-phosphate isomerase 2 (345 aa).

Substrate is bound by residues 47–49 (RGA), Arg88, and Gln194. The active-site Proton donor is Asp235. 245–246 (NK) provides a ligand contact to substrate.

It belongs to the eIF-2B alpha/beta/delta subunits family. MtnA subfamily.

The enzyme catalyses 5-(methylsulfanyl)-alpha-D-ribose 1-phosphate = 5-(methylsulfanyl)-D-ribulose 1-phosphate. Its pathway is amino-acid biosynthesis; L-methionine biosynthesis via salvage pathway; L-methionine from S-methyl-5-thio-alpha-D-ribose 1-phosphate: step 1/6. Its function is as follows. Catalyzes the interconversion of methylthioribose-1-phosphate (MTR-1-P) into methylthioribulose-1-phosphate (MTRu-1-P). The protein is Methylthioribose-1-phosphate isomerase 2 of Pseudothermotoga lettingae (strain ATCC BAA-301 / DSM 14385 / NBRC 107922 / TMO) (Thermotoga lettingae).